We begin with the raw amino-acid sequence, 154 residues long: Myoglobin (154 aa).

The Globin domain maps to 2–148; it reads GLSDGEWQLV…FRNDMAAKYK (147 aa). Phosphoserine is present on Ser4. Residue His65 coordinates nitrite. His65 provides a ligand contact to O2. Residue Thr68 is modified to Phosphothreonine. His94 is a heme b binding site.

Belongs to the globin family. As to quaternary structure, monomeric.

The protein resides in the cytoplasm. It is found in the sarcoplasm. It carries out the reaction Fe(III)-heme b-[protein] + nitric oxide + H2O = Fe(II)-heme b-[protein] + nitrite + 2 H(+). The catalysed reaction is H2O2 + AH2 = A + 2 H2O. Its function is as follows. Monomeric heme protein which primary function is to store oxygen and facilitate its diffusion within muscle tissues. Reversibly binds oxygen through a pentacoordinated heme iron and enables its timely and efficient release as needed during periods of heightened demand. Depending on the oxidative conditions of tissues and cells, and in addition to its ability to bind oxygen, it also has a nitrite reductase activity whereby it regulates the production of bioactive nitric oxide. Under stress conditions, like hypoxia and anoxia, it also protects cells against reactive oxygen species thanks to its pseudoperoxidase activity. The polypeptide is Myoglobin (MB) (Lagothrix lagotricha (Brown woolly monkey)).